The primary structure comprises 329 residues: Phospholipid scramblase 4 (329 aa).

Residues 1–51 (MSGVVPTAPEQPAGEMENQTKPPDPRPDAPPEYNSHFLPGPPGTAVPPPTG) form a disordered region. Residues 1-98 (MSGVVPTAPE…PMPNQSVPIT (98 aa)) are proline-rich domain (PRD). Over 1 to 303 (MSGVVPTAPE…IHFPLDLDVK (303 aa)) the chain is Cytoplasmic. The SH3-binding 1 signature appears at 18 to 25 (NQTKPPDP). Residues 30–33 (PPEY) carry the PPxY motif motif. Over residues 39-51 (PGPPGTAVPPPTG) the composition is skewed to pro residues. The short motif at 41–49 (PPGTAVPPP) is the SH3-binding 2 element. Residues Y83 and Y88 each carry the phosphotyrosine; by ABL modification. The SH3-binding 3 motif lies at 98–106 (TWMPGPTPM). S-palmitoyl cysteine attachment occurs at residues C197, C198, C199, C201, and C202. Positions 271 to 283 (NIGSIIRKWNGLL) match the Nuclear localization signal motif. Residues 304 to 320 (MKAMIFGACFLIDFMYF) traverse the membrane as a helical segment. The Extracellular segment spans residues 321 to 329 (ERSPPQRSR).

Belongs to the phospholipid scramblase family. As to quaternary structure, interacts with PDCD6. Interacts with KPNA2; this interaction mediates the nucleus import of PLSCR4. Requires Ca(2+) as cofactor. Mg(2+) is required as a cofactor. Zn(2+) serves as cofactor. In terms of tissue distribution, expressed in heart, brain, placenta, lung, liver, kidney, pancreas, spleen, thymus, prostate, testis, uterus, small intestine and colon. Not detected in peripheral blood lymphocytes.

It is found in the cell membrane. The protein localises to the nucleus. The catalysed reaction is a 1,2-diacyl-sn-glycero-3-phosphocholine(in) = a 1,2-diacyl-sn-glycero-3-phosphocholine(out). It carries out the reaction a 1,2-diacyl-sn-glycero-3-phospho-L-serine(in) = a 1,2-diacyl-sn-glycero-3-phospho-L-serine(out). Its function is as follows. Catalyzes metal ion-induced ATP-independent rapid bidirectional and non-specific movement of phospholipids (lipid scrambling or lipid flip-flop) between the inner and outer leaflet of the plasma membrane and participates in the redistribution of phospholipids between membrane leaflets. Metal ions bind to the calcium-binding site and induce conformation change in the protein. Has a greater affi nity for Ca(2+) than Mg(2+) and Zn(2+). The protein is Phospholipid scramblase 4 of Homo sapiens (Human).